We begin with the raw amino-acid sequence, 96 residues long: Large ribosomal subunit protein bL28 (96 aa).

The protein belongs to the bacterial ribosomal protein bL28 family.

This Parvibaculum lavamentivorans (strain DS-1 / DSM 13023 / NCIMB 13966) protein is Large ribosomal subunit protein bL28.